Consider the following 404-residue polypeptide: Glucose-1-phosphate adenylyltransferase (404 aa).

Alpha-D-glucose 1-phosphate-binding positions include Tyr-99, Gly-164, 179–180, and Ser-197; that span reads EK.

Belongs to the bacterial/plant glucose-1-phosphate adenylyltransferase family.

It catalyses the reaction alpha-D-glucose 1-phosphate + ATP + H(+) = ADP-alpha-D-glucose + diphosphate. It functions in the pathway glycan biosynthesis; glycogen biosynthesis. In terms of biological role, involved in the biosynthesis of ADP-glucose, a building block, required in the biosynthesis of maltose-1-phosphate (M1P) and in the elongation reactions to produce linear alpha-1,4-glucans. Catalyzes the reaction between ATP and alpha-D-glucose 1-phosphate (G1P) to produce pyrophosphate and ADP-Glc. This chain is Glucose-1-phosphate adenylyltransferase, found in Mycolicibacterium gilvum (strain PYR-GCK) (Mycobacterium gilvum (strain PYR-GCK)).